A 146-amino-acid chain; its full sequence is Hemoglobin subunit beta-2 (146 aa).

The Globin domain maps to 2–146 (FLSAEEKGLV…VASALAHRYH (145 aa)). At K17 the chain carries N6-succinyllysine. Phosphoserine is present on residues S44 and S50. Position 59 is an N6-succinyllysine (K59). Positions 63 and 92 each coordinate heme b. An Asymmetric dimethylarginine modification is found at R104.

It belongs to the globin family. Heterotetramer of two alpha chains and two beta chains. In terms of tissue distribution, red blood cells.

In terms of biological role, involved in oxygen transport from the lung to the various peripheral tissues. This chain is Hemoglobin subunit beta-2 (HBB2), found in Panthera pardus saxicolor (Northern Persian leopard).